The chain runs to 344 residues: N-acetyl-gamma-glutamyl-phosphate reductase (344 aa).

Residue Cys-149 is part of the active site.

Belongs to the NAGSA dehydrogenase family. Type 1 subfamily.

It localises to the cytoplasm. It catalyses the reaction N-acetyl-L-glutamate 5-semialdehyde + phosphate + NADP(+) = N-acetyl-L-glutamyl 5-phosphate + NADPH + H(+). It participates in amino-acid biosynthesis; L-arginine biosynthesis; N(2)-acetyl-L-ornithine from L-glutamate: step 3/4. Functionally, catalyzes the NADPH-dependent reduction of N-acetyl-5-glutamyl phosphate to yield N-acetyl-L-glutamate 5-semialdehyde. This Thermoanaerobacter pseudethanolicus (strain ATCC 33223 / 39E) (Clostridium thermohydrosulfuricum) protein is N-acetyl-gamma-glutamyl-phosphate reductase.